A 90-amino-acid chain; its full sequence is UPF0213 protein Reut_B5558 (90 aa).

In terms of domain architecture, GIY-YIG spans 5–80; it reads RQWYLYLLEC…KRMSSAQKIA (76 aa).

It belongs to the UPF0213 family.

This Cupriavidus pinatubonensis (strain JMP 134 / LMG 1197) (Cupriavidus necator (strain JMP 134)) protein is UPF0213 protein Reut_B5558.